A 186-amino-acid polypeptide reads, in one-letter code: Large ribosomal subunit protein uL5 (186 aa).

The protein belongs to the universal ribosomal protein uL5 family. In terms of assembly, part of the 50S ribosomal subunit; part of the 5S rRNA/L5/L18/L25 subcomplex. Contacts the 5S rRNA and the P site tRNA. Forms a bridge to the 30S subunit in the 70S ribosome.

This is one of the proteins that bind and probably mediate the attachment of the 5S RNA into the large ribosomal subunit, where it forms part of the central protuberance. In the 70S ribosome it contacts protein S13 of the 30S subunit (bridge B1b), connecting the 2 subunits; this bridge is implicated in subunit movement. Contacts the P site tRNA; the 5S rRNA and some of its associated proteins might help stabilize positioning of ribosome-bound tRNAs. The sequence is that of Large ribosomal subunit protein uL5 from Phenylobacterium zucineum (strain HLK1).